A 270-amino-acid chain; its full sequence is 3-methyl-2-oxobutanoate hydroxymethyltransferase (270 aa).

2 residues coordinate Mg(2+): D41 and D80. 3-methyl-2-oxobutanoate is bound by residues D41–S42, D80, and K109. E111 provides a ligand contact to Mg(2+). Catalysis depends on E178, which acts as the Proton acceptor.

The protein belongs to the PanB family. Homodecamer; pentamer of dimers. Mg(2+) is required as a cofactor.

It is found in the cytoplasm. It carries out the reaction 3-methyl-2-oxobutanoate + (6R)-5,10-methylene-5,6,7,8-tetrahydrofolate + H2O = 2-dehydropantoate + (6S)-5,6,7,8-tetrahydrofolate. It functions in the pathway cofactor biosynthesis; (R)-pantothenate biosynthesis; (R)-pantoate from 3-methyl-2-oxobutanoate: step 1/2. Functionally, catalyzes the reversible reaction in which hydroxymethyl group from 5,10-methylenetetrahydrofolate is transferred onto alpha-ketoisovalerate to form ketopantoate. The polypeptide is 3-methyl-2-oxobutanoate hydroxymethyltransferase (Thermotoga maritima (strain ATCC 43589 / DSM 3109 / JCM 10099 / NBRC 100826 / MSB8)).